The following is a 29-amino-acid chain: Cyclotide mela-2 (29 aa).

The cyclopeptide (Gly-Asp) cross-link spans 1–29 (GKPTCGETCFKGKCYTPGCTCSYPLCKKD). 3 disulfide bridges follow: Cys5/Cys19, Cys9/Cys21, and Cys14/Cys26.

In terms of processing, this is a cyclic peptide. Contains 3 disulfide bonds.

In terms of biological role, probably participates in a plant defense mechanism (Potential). Binds to and induces leakage in phospholipd membranes, particularly ones containing 1-palmitoyl-2-oleophosphatidylethanolamine (POPE). In vitro, displays cytotoxicity against cultured cells but no hemolytic activity towards fresh erythrocytes. Not active against Gram-negative bacterium E.coli ATCC 25922 or Gram-positive bacterium S.aureus ATCC 25923 up to a concentration of 64 uM. This is Cyclotide mela-2 from Melicytus latifolius (Norfolk Island mahoe).